The chain runs to 154 residues: Insulin-like growth factor 1 (154 aa).

The interval 50–78 is b; that stretch reads GPETLCGAELVDALQFVCGDRGFYFNKPT. 3 disulfide bridges follow: C55-C97, C67-C110, and C96-C101. The interval 79-90 is c; the sequence is GYGSSSRRAPQT. The interval 91 to 111 is a; the sequence is GIVDECCFRSCDLRRLEMYCA. Residues 112–119 are d; that stretch reads PLKAAKSA. A propeptide spans 120–154 (e peptide); that stretch reads RSVRAQRHTDMPKAQKEVHLKNTSRGSAGNKNYRM. The interval 121-154 is disordered; sequence SVRAQRHTDMPKAQKEVHLKNTSRGSAGNKNYRM. The segment covering 126 to 139 has biased composition (basic and acidic residues); the sequence is RHTDMPKAQKEVHL. Residues 140–154 are compositionally biased toward polar residues; the sequence is KNTSRGSAGNKNYRM.

This sequence belongs to the insulin family. Forms a ternary complex with IGFR1 and ITGAV:ITGB3. Forms a ternary complex with IGFR1 and ITGA6:ITGB4. Forms a ternary complex with IGFBP3 and ALS.

The protein resides in the secreted. In terms of biological role, the insulin-like growth factors, isolated from plasma, are structurally and functionally related to insulin but have a much higher growth-promoting activity. May be a physiological regulator of [1-14C]-2-deoxy-D-glucose (2DG) transport and glycogen synthesis in osteoblasts. Stimulates glucose transport in bone-derived osteoblastic (PyMS) cells and is effective at much lower concentrations than insulin, not only regarding glycogen and DNA synthesis but also with regard to enhancing glucose uptake. May play a role in synapse maturation. Ca(2+)-dependent exocytosis of IGF1 is required for sensory perception of smell in the olfactory bulb. Acts as a ligand for IGF1R. Binds to the alpha subunit of IGF1R, leading to the activation of the intrinsic tyrosine kinase activity which autophosphorylates tyrosine residues in the beta subunit thus initiating a cascade of down-stream signaling events leading to activation of the PI3K-AKT/PKB and the Ras-MAPK pathways. Binds to integrins ITGAV:ITGB3 and ITGA6:ITGB4. Its binding to integrins and subsequent ternary complex formation with integrins and IGFR1 are essential for IGF1 signaling. Induces the phosphorylation and activation of IGFR1, MAPK3/ERK1, MAPK1/ERK2 and AKT1. As part of the MAPK/ERK signaling pathway, acts as a negative regulator of apoptosis in cardiomyocytes via promotion of STUB1/CHIP-mediated ubiquitination and degradation of ICER-type isoforms of CREM. This is Insulin-like growth factor 1 from Ovis aries (Sheep).